Consider the following 828-residue polypeptide: Periplasmic nitrate reductase (828 aa).

A signal peptide (tat-type signal) is located at residues 1 to 31 (MKLSRRSFMKANAVAAAAAAAGLSVPGVARA). The 57-residue stretch at 39–95 (IKWDKAPCRFCGTGCGVLVGTQQGRVVACQGDPDAPVNRGLNCIKGYFLPKIMYGKD) folds into the 4Fe-4S Mo/W bis-MGD-type domain. [4Fe-4S] cluster is bound by residues Cys-46, Cys-49, Cys-53, and Cys-81. Mo-bis(molybdopterin guanine dinucleotide) is bound by residues Lys-83, Gln-150, Asn-175, Cys-179, 212-219 (WGSNMAEM), 243-247 (STYQH), 262-264 (QSD), Met-372, Gln-376, Asn-482, 508-509 (SD), Lys-531, Asp-558, and 718-727 (TGRVLEHWHT). Residue Phe-794 coordinates substrate. The Mo-bis(molybdopterin guanine dinucleotide) site is built by Asn-802 and Lys-819.

This sequence belongs to the prokaryotic molybdopterin-containing oxidoreductase family. NasA/NapA/NarB subfamily. In terms of assembly, component of the periplasmic nitrate reductase NapAB complex composed of NapA and NapB. The cofactor is [4Fe-4S] cluster. Requires Mo-bis(molybdopterin guanine dinucleotide) as cofactor. Predicted to be exported by the Tat system. The position of the signal peptide cleavage has not been experimentally proven.

It localises to the periplasm. The catalysed reaction is 2 Fe(II)-[cytochrome] + nitrate + 2 H(+) = 2 Fe(III)-[cytochrome] + nitrite + H2O. Functionally, catalytic subunit of the periplasmic nitrate reductase complex NapAB. Receives electrons from NapB and catalyzes the reduction of nitrate to nitrite. In Escherichia coli O1:K1 / APEC, this protein is Periplasmic nitrate reductase.